The primary structure comprises 148 residues: Large ribosomal subunit protein bL9 (148 aa).

This sequence belongs to the bacterial ribosomal protein bL9 family.

In terms of biological role, binds to the 23S rRNA. The protein is Large ribosomal subunit protein bL9 of Staphylococcus aureus (strain Newman).